A 317-amino-acid polypeptide reads, in one-letter code: Putative 2-hydroxyacid dehydrogenase SAOUHSC_02577 (317 aa).

Residues 155–156, 234–236, and Asp-260 contribute to the NAD(+) site; these read EI and ASR. Arg-236 is an active-site residue. Glu-265 is an active-site residue. The Proton donor role is filled by His-283. Residue 283-286 participates in NAD(+) binding; that stretch reads HIGN.

This sequence belongs to the D-isomer specific 2-hydroxyacid dehydrogenase family.

The protein is Putative 2-hydroxyacid dehydrogenase SAOUHSC_02577 of Staphylococcus aureus (strain NCTC 8325 / PS 47).